The primary structure comprises 293 residues: Elongation factor Ts (293 aa).

Positions 81–84 are involved in Mg(2+) ion dislocation from EF-Tu; that stretch reads TDFV.

Belongs to the EF-Ts family.

Its subcellular location is the cytoplasm. Associates with the EF-Tu.GDP complex and induces the exchange of GDP to GTP. It remains bound to the aminoacyl-tRNA.EF-Tu.GTP complex up to the GTP hydrolysis stage on the ribosome. The chain is Elongation factor Ts from Thioalkalivibrio sulfidiphilus (strain HL-EbGR7).